We begin with the raw amino-acid sequence, 429 residues long: Trigger factor (429 aa).

Residues 161-246 (GDRLSIDFKG…INEVALPKEP (86 aa)) form the PPIase FKBP-type domain.

This sequence belongs to the FKBP-type PPIase family. Tig subfamily.

The protein localises to the cytoplasm. It catalyses the reaction [protein]-peptidylproline (omega=180) = [protein]-peptidylproline (omega=0). Functionally, involved in protein export. Acts as a chaperone by maintaining the newly synthesized protein in an open conformation. Functions as a peptidyl-prolyl cis-trans isomerase. This is Trigger factor from Ruthia magnifica subsp. Calyptogena magnifica.